The chain runs to 528 residues: Probable histone-arginine methyltransferase 1.4 (528 aa).

Met1 is modified (N-acetylmethionine). An SAM-dependent MTase PRMT-type domain is found at 144 to 459; sequence EAASAKMYFH…QSYTINLTLS (316 aa). Positions 161, 170, 194, 216, and 246 each coordinate S-adenosyl-L-methionine. Catalysis depends on residues Glu260 and Glu269. Thr274 is a binding site for S-adenosyl-L-methionine.

The protein belongs to the class I-like SAM-binding methyltransferase superfamily. Protein arginine N-methyltransferase family.

The protein localises to the nucleus. It is found in the cytoplasm. The enzyme catalyses L-arginyl-[protein] + 2 S-adenosyl-L-methionine = N(omega),N(omega)-dimethyl-L-arginyl-[protein] + 2 S-adenosyl-L-homocysteine + 2 H(+). Methylates (mono- and asymmetric dimethylation) the guanidino nitrogens of arginyl residues in several proteins involved in DNA packaging, transcription regulation, and mRNA stability. Recruited to promoters upon gene activation, methylates histone H3 and activates transcription via chromatin remodeling. The protein is Probable histone-arginine methyltransferase 1.4 (PRMT14) of Arabidopsis thaliana (Mouse-ear cress).